A 210-amino-acid polypeptide reads, in one-letter code: Dephospho-CoA kinase (210 aa).

Positions 15–210 constitute a DPCK domain; it reads VLGLTGGIGC…HKGYLKLALK (196 aa). An ATP-binding site is contributed by 23-28; the sequence is GCGKTA.

The protein belongs to the CoaE family.

Its subcellular location is the cytoplasm. It carries out the reaction 3'-dephospho-CoA + ATP = ADP + CoA + H(+). It functions in the pathway cofactor biosynthesis; coenzyme A biosynthesis; CoA from (R)-pantothenate: step 5/5. Functionally, catalyzes the phosphorylation of the 3'-hydroxyl group of dephosphocoenzyme A to form coenzyme A. The chain is Dephospho-CoA kinase from Pseudoalteromonas translucida (strain TAC 125).